The following is a 183-amino-acid chain: MKGVLKGLAVVVEDVEFARKLYKEGFYGRFLGYDKVRREEVDKISAPLILALYEALYLAERGKLKVVSKNGTEVLPEKLIELGREKIKNFDDIYKIYKYFRDLGYVVKSGLKFGALFSVYERGPGIDHAPMVVVFLEPDRGISATDITRGGRLSHSVKKTFTLATVSKQTGEVVLLGFSWAKL.

Residues tyrosine 120, histidine 128, and lysine 159 contribute to the active site.

The protein belongs to the tRNA-intron endonuclease family. Archaeal short subfamily. Homotetramer; although the tetramer contains four active sites, only two participate in the cleavage. Therefore, it should be considered as a dimer of dimers.

The enzyme catalyses pretRNA = a 3'-half-tRNA molecule with a 5'-OH end + a 5'-half-tRNA molecule with a 2',3'-cyclic phosphate end + an intron with a 2',3'-cyclic phosphate and a 5'-hydroxyl terminus.. Its function is as follows. Endonuclease that removes tRNA introns. Cleaves pre-tRNA at the 5'- and 3'-splice sites to release the intron. The products are an intron and two tRNA half-molecules bearing 2',3' cyclic phosphate and 5'-OH termini. Recognizes a pseudosymmetric substrate in which 2 bulged loops of 3 bases are separated by a stem of 4 bp. This is tRNA-splicing endonuclease from Pyrobaculum islandicum (strain DSM 4184 / JCM 9189 / GEO3).